Reading from the N-terminus, the 177-residue chain is ATP synthase subunit delta (177 aa).

Belongs to the ATPase delta chain family. F-type ATPases have 2 components, F(1) - the catalytic core - and F(0) - the membrane proton channel. F(1) has five subunits: alpha(3), beta(3), gamma(1), delta(1), epsilon(1). F(0) has three main subunits: a(1), b(2) and c(10-14). The alpha and beta chains form an alternating ring which encloses part of the gamma chain. F(1) is attached to F(0) by a central stalk formed by the gamma and epsilon chains, while a peripheral stalk is formed by the delta and b chains.

It is found in the cell inner membrane. In terms of biological role, f(1)F(0) ATP synthase produces ATP from ADP in the presence of a proton or sodium gradient. F-type ATPases consist of two structural domains, F(1) containing the extramembraneous catalytic core and F(0) containing the membrane proton channel, linked together by a central stalk and a peripheral stalk. During catalysis, ATP synthesis in the catalytic domain of F(1) is coupled via a rotary mechanism of the central stalk subunits to proton translocation. Its function is as follows. This protein is part of the stalk that links CF(0) to CF(1). It either transmits conformational changes from CF(0) to CF(1) or is implicated in proton conduction. This Aliivibrio fischeri (strain ATCC 700601 / ES114) (Vibrio fischeri) protein is ATP synthase subunit delta.